The following is a 653-amino-acid chain: Extracellular metalloproteinase (653 aa).

Residues 1–19 (MRSFLLASLASLSVISVYG) form the signal peptide. Residues 20–244 (HPHARSTLTR…VHAVVDYSAD (225 aa)) constitute a propeptide that is removed on maturation. Asparagine 327, asparagine 336, and asparagine 412 each carry an N-linked (GlcNAc...) asparagine glycan. Histidine 429 is a binding site for Zn(2+). Glutamate 430 is an active-site residue. Position 433 (histidine 433) interacts with Zn(2+). N-linked (GlcNAc...) asparagine glycosylation is found at asparagine 636 and asparagine 637.

This sequence belongs to the peptidase M36 family. Zn(2+) serves as cofactor.

The protein localises to the secreted. Its function is as follows. Secreted metalloproteinase that allows assimilation of proteinaceous substrates. The polypeptide is Extracellular metalloproteinase (MEP) (Pyrenophora tritici-repentis (strain Pt-1C-BFP) (Wheat tan spot fungus)).